Reading from the N-terminus, the 104-residue chain is L-rhamnose mutarotase (104 aa).

Position 18 (Tyr18) interacts with substrate. The active-site Proton donor is the His22. Residues Tyr41 and 76 to 77 (WW) contribute to the substrate site.

Belongs to the rhamnose mutarotase family. In terms of assembly, homodimer.

It is found in the cytoplasm. It catalyses the reaction alpha-L-rhamnose = beta-L-rhamnose. Its pathway is carbohydrate metabolism; L-rhamnose metabolism. Involved in the anomeric conversion of L-rhamnose. This is L-rhamnose mutarotase from Opitutus terrae (strain DSM 11246 / JCM 15787 / PB90-1).